The sequence spans 151 residues: Ribosomal RNA large subunit methyltransferase H (151 aa).

Residues G100 and 119–124 each bind S-adenosyl-L-methionine; that span reads LSRMTF.

This sequence belongs to the RNA methyltransferase RlmH family. Homodimer.

The protein resides in the cytoplasm. The enzyme catalyses pseudouridine(1915) in 23S rRNA + S-adenosyl-L-methionine = N(3)-methylpseudouridine(1915) in 23S rRNA + S-adenosyl-L-homocysteine + H(+). In terms of biological role, specifically methylates the pseudouridine at position 1915 (m3Psi1915) in 23S rRNA. The protein is Ribosomal RNA large subunit methyltransferase H of Thermotoga neapolitana (strain ATCC 49049 / DSM 4359 / NBRC 107923 / NS-E).